The following is a 769-amino-acid chain: Phosphoribosylformylglycinamidine synthase subunit PurL (769 aa).

Residues 1 to 13 are compositionally biased toward polar residues; it reads MTGTPSAPTTSPD. Residues 1–30 form a disordered region; the sequence is MTGTPSAPTTSPDDQADGPGEGTVDRQPYR. Histidine 65 is a catalytic residue. ATP contacts are provided by tyrosine 68 and lysine 109. Glutamate 111 lines the Mg(2+) pocket. Residues 112-115 and arginine 134 each bind substrate; that span reads SHNH. Histidine 113 acts as the Proton acceptor in catalysis. Aspartate 135 lines the Mg(2+) pocket. Glutamine 260 is a substrate binding site. Residue aspartate 288 coordinates Mg(2+). A substrate-binding site is contributed by 337 to 339; sequence ESQ. Positions 524 and 561 each coordinate ATP. Asparagine 562 serves as a coordination point for Mg(2+). Residue serine 564 participates in substrate binding.

It belongs to the FGAMS family. In terms of assembly, monomer. Part of the FGAM synthase complex composed of 1 PurL, 1 PurQ and 2 PurS subunits.

The protein localises to the cytoplasm. It carries out the reaction N(2)-formyl-N(1)-(5-phospho-beta-D-ribosyl)glycinamide + L-glutamine + ATP + H2O = 2-formamido-N(1)-(5-O-phospho-beta-D-ribosyl)acetamidine + L-glutamate + ADP + phosphate + H(+). Its pathway is purine metabolism; IMP biosynthesis via de novo pathway; 5-amino-1-(5-phospho-D-ribosyl)imidazole from N(2)-formyl-N(1)-(5-phospho-D-ribosyl)glycinamide: step 1/2. Part of the phosphoribosylformylglycinamidine synthase complex involved in the purines biosynthetic pathway. Catalyzes the ATP-dependent conversion of formylglycinamide ribonucleotide (FGAR) and glutamine to yield formylglycinamidine ribonucleotide (FGAM) and glutamate. The FGAM synthase complex is composed of three subunits. PurQ produces an ammonia molecule by converting glutamine to glutamate. PurL transfers the ammonia molecule to FGAR to form FGAM in an ATP-dependent manner. PurS interacts with PurQ and PurL and is thought to assist in the transfer of the ammonia molecule from PurQ to PurL. The polypeptide is Phosphoribosylformylglycinamidine synthase subunit PurL (Parafrankia sp. (strain EAN1pec)).